A 548-amino-acid chain; its full sequence is Thermosome subunit alpha (548 aa).

The disordered stretch occupies residues 527 to 548 (TKPEGGQGGGMPGGMGGMDMGM). Positions 531 to 548 (GGQGGGMPGGMGGMDMGM) are enriched in gly residues.

The protein belongs to the TCP-1 chaperonin family. In terms of assembly, forms a Heterooligomeric complex of two stacked eight-membered rings.

Molecular chaperone; binds unfolded polypeptides in vitro, and has a weak ATPase activity. The chain is Thermosome subunit alpha (thsA) from Thermococcus sp. (strain JCM 11816 / KS-1).